Consider the following 149-residue polypeptide: Nucleoside diphosphate kinase (149 aa).

K9, F57, R85, T91, R102, and N112 together coordinate ATP. H115 serves as the catalytic Pros-phosphohistidine intermediate.

Belongs to the NDK family. As to quaternary structure, homotetramer. The cofactor is Mg(2+).

It is found in the cytoplasm. It catalyses the reaction dZDP + ATP = dZTP + ADP. The catalysed reaction is a 2'-deoxyribonucleoside 5'-diphosphate + ATP = a 2'-deoxyribonucleoside 5'-triphosphate + ADP. It carries out the reaction a ribonucleoside 5'-diphosphate + ATP = a ribonucleoside 5'-triphosphate + ADP. The protein operates within purine metabolism. Functionally, major role in the synthesis of nucleoside triphosphates other than ATP. The ATP gamma phosphate is transferred to the NDP beta phosphate via a ping-pong mechanism, using a phosphorylated active-site intermediate. (Microbial infection) Catalyzes the phosphorylation of dZDP to dZTP, when the bacterium is infected by a phage that produces the substrate for the synthesis of dZTP (2- amino-2'-deoxyadenosine 5'-triphosphate), which is then used by the phage as a DNA polymerase substrate. In Synechococcus sp. (strain JA-3-3Ab) (Cyanobacteria bacterium Yellowstone A-Prime), this protein is Nucleoside diphosphate kinase.